The chain runs to 113 residues: Iron-sulfur cluster insertion protein ErpA (113 aa).

The iron-sulfur cluster site is built by C41, C105, and C107.

Belongs to the HesB/IscA family. In terms of assembly, homodimer. Iron-sulfur cluster serves as cofactor.

Its function is as follows. Required for insertion of 4Fe-4S clusters for at least IspG. This Photobacterium profundum (strain SS9) protein is Iron-sulfur cluster insertion protein ErpA.